The primary structure comprises 118 residues: Na(+)/H(+) antiporter subunit G1 (118 aa).

3 helical membrane-spanning segments follow: residues 4 to 24, 38 to 58, and 60 to 80; these read IILISLALIFVIIGALISALA, AHAAGKASTLGAMSLLFGTFL, and FIATQGFVNMQLIVAIIFVLI.

It belongs to the CPA3 antiporters (TC 2.A.63) subunit G family. In terms of assembly, may form a heterooligomeric complex that consists of seven subunits: mnhA1, mnhB1, mnhC1, mnhD1, mnhE1, mnhF1 and mnhG1.

It is found in the cell membrane. Functionally, mnh complex is a Na(+)/H(+) antiporter involved in Na(+) excretion. The chain is Na(+)/H(+) antiporter subunit G1 (mnhG1) from Staphylococcus aureus (strain Mu3 / ATCC 700698).